Here is a 41-residue protein sequence, read N- to C-terminus: Large ribosomal subunit protein bL36 (41 aa).

Belongs to the bacterial ribosomal protein bL36 family.

The polypeptide is Large ribosomal subunit protein bL36 (Edwardsiella ictaluri (strain 93-146)).